The following is a 207-amino-acid chain: Ribosomal RNA small subunit methyltransferase G (207 aa).

S-adenosyl-L-methionine contacts are provided by residues G76, Q81, 127–128, and R141; that span reads VE.

Belongs to the methyltransferase superfamily. RNA methyltransferase RsmG family.

The protein localises to the cytoplasm. It carries out the reaction guanosine(527) in 16S rRNA + S-adenosyl-L-methionine = N(7)-methylguanosine(527) in 16S rRNA + S-adenosyl-L-homocysteine. Functionally, specifically methylates the N7 position of guanine in position 527 of 16S rRNA. This Neisseria gonorrhoeae (strain ATCC 700825 / FA 1090) protein is Ribosomal RNA small subunit methyltransferase G.